Consider the following 300-residue polypeptide: Dihydroorotate dehydrogenase B (NAD(+)), catalytic subunit (300 aa).

FMN contacts are provided by residues S21 and 45-46 (KS). Substrate is bound by residues K45, 69-73 (NAVGL), and N125. Position 125 (N125) interacts with FMN. C128 (nucleophile) is an active-site residue. Residues K163 and I187 each coordinate FMN. Position 188–189 (188–189 (NT)) interacts with substrate. FMN-binding positions include G213, 239 to 240 (GG), and 261 to 262 (GT).

It belongs to the dihydroorotate dehydrogenase family. Type 1 subfamily. As to quaternary structure, heterotetramer of 2 PyrK and 2 PyrD type B subunits. FMN serves as cofactor.

It is found in the cytoplasm. The catalysed reaction is (S)-dihydroorotate + NAD(+) = orotate + NADH + H(+). It participates in pyrimidine metabolism; UMP biosynthesis via de novo pathway; orotate from (S)-dihydroorotate (NAD(+) route): step 1/1. In terms of biological role, catalyzes the conversion of dihydroorotate to orotate with NAD(+) as electron acceptor. The chain is Dihydroorotate dehydrogenase B (NAD(+)), catalytic subunit (pyrD) from Thermoplasma acidophilum (strain ATCC 25905 / DSM 1728 / JCM 9062 / NBRC 15155 / AMRC-C165).